The sequence spans 156 residues: 6,7-dimethyl-8-ribityllumazine synthase (156 aa).

5-amino-6-(D-ribitylamino)uracil-binding positions include F23, 57–59 (AYE), and 81–83 (AII). A (2S)-2-hydroxy-3-oxobutyl phosphate-binding site is contributed by 86-87 (GT). The Proton donor role is filled by H89. 5-amino-6-(D-ribitylamino)uracil is bound at residue F114. R128 serves as a coordination point for (2S)-2-hydroxy-3-oxobutyl phosphate.

Belongs to the DMRL synthase family.

The enzyme catalyses (2S)-2-hydroxy-3-oxobutyl phosphate + 5-amino-6-(D-ribitylamino)uracil = 6,7-dimethyl-8-(1-D-ribityl)lumazine + phosphate + 2 H2O + H(+). It functions in the pathway cofactor biosynthesis; riboflavin biosynthesis; riboflavin from 2-hydroxy-3-oxobutyl phosphate and 5-amino-6-(D-ribitylamino)uracil: step 1/2. Catalyzes the formation of 6,7-dimethyl-8-ribityllumazine by condensation of 5-amino-6-(D-ribitylamino)uracil with 3,4-dihydroxy-2-butanone 4-phosphate. This is the penultimate step in the biosynthesis of riboflavin. The protein is 6,7-dimethyl-8-ribityllumazine synthase of Helicobacter pylori (strain Shi470).